A 222-amino-acid polypeptide reads, in one-letter code: Potassium-transporting ATPase KdpC subunit (222 aa).

The helical transmembrane segment at 13-35 threads the bilayer; that stretch reads WAGLRSLLVLTVVTGVLYPLAVT. Residues 136-162 are disordered; that stretch reads TADHKVKPSDVPADAVTSSGSGLDPDI.

Belongs to the KdpC family. As to quaternary structure, the system is composed of three essential subunits: KdpA, KdpB and KdpC.

The protein resides in the cell membrane. Functionally, part of the high-affinity ATP-driven potassium transport (or Kdp) system, which catalyzes the hydrolysis of ATP coupled with the electrogenic transport of potassium into the cytoplasm. This subunit acts as a catalytic chaperone that increases the ATP-binding affinity of the ATP-hydrolyzing subunit KdpB by the formation of a transient KdpB/KdpC/ATP ternary complex. The polypeptide is Potassium-transporting ATPase KdpC subunit (Streptomyces avermitilis (strain ATCC 31267 / DSM 46492 / JCM 5070 / NBRC 14893 / NCIMB 12804 / NRRL 8165 / MA-4680)).